The primary structure comprises 342 residues: Dihydroorotate dehydrogenase (quinone) (342 aa).

Residues 65-69 and Thr89 each bind FMN; that span reads AGLDK. Lys69 contributes to the substrate binding site. 114-118 contributes to the substrate binding site; it reads NRMGF. 2 residues coordinate FMN: Asn142 and Asn175. Asn175 provides a ligand contact to substrate. The Nucleophile role is filled by Ser178. Asn180 contributes to the substrate binding site. FMN is bound by residues Lys220 and Thr248. 249–250 lines the substrate pocket; sequence NT. FMN contacts are provided by residues Gly271, Gly300, and 321–322; that span reads YT.

Belongs to the dihydroorotate dehydrogenase family. Type 2 subfamily. Monomer. Requires FMN as cofactor.

It is found in the cell membrane. The enzyme catalyses (S)-dihydroorotate + a quinone = orotate + a quinol. Its pathway is pyrimidine metabolism; UMP biosynthesis via de novo pathway; orotate from (S)-dihydroorotate (quinone route): step 1/1. Its function is as follows. Catalyzes the conversion of dihydroorotate to orotate with quinone as electron acceptor. This Burkholderia pseudomallei (strain K96243) protein is Dihydroorotate dehydrogenase (quinone).